A 432-amino-acid chain; its full sequence is 23S rRNA (uracil(1939)-C(5))-methyltransferase RlmD (432 aa).

One can recognise a TRAM domain in the interval 10 to 68 (RVTTREIITVTTDGLDAFGQGVARHHGKALFIAGLLPGERAEVVLSEDKKQFARGDVKK). Residues C81, C87, C90, and C162 each coordinate [4Fe-4S] cluster. The S-adenosyl-L-methionine site is built by Q265, F294, N299, E315, N342, and D363. The active-site Nucleophile is the C389.

The protein belongs to the class I-like SAM-binding methyltransferase superfamily. RNA M5U methyltransferase family. RlmD subfamily.

The enzyme catalyses uridine(1939) in 23S rRNA + S-adenosyl-L-methionine = 5-methyluridine(1939) in 23S rRNA + S-adenosyl-L-homocysteine + H(+). In terms of biological role, catalyzes the formation of 5-methyl-uridine at position 1939 (m5U1939) in 23S rRNA. This is 23S rRNA (uracil(1939)-C(5))-methyltransferase RlmD from Cronobacter sakazakii (strain ATCC BAA-894) (Enterobacter sakazakii).